A 397-amino-acid chain; its full sequence is Tryptophan synthase beta chain (397 aa).

K87 carries the post-translational modification N6-(pyridoxal phosphate)lysine.

Belongs to the TrpB family. Tetramer of two alpha and two beta chains. Requires pyridoxal 5'-phosphate as cofactor.

It carries out the reaction (1S,2R)-1-C-(indol-3-yl)glycerol 3-phosphate + L-serine = D-glyceraldehyde 3-phosphate + L-tryptophan + H2O. The protein operates within amino-acid biosynthesis; L-tryptophan biosynthesis; L-tryptophan from chorismate: step 5/5. Its function is as follows. The beta subunit is responsible for the synthesis of L-tryptophan from indole and L-serine. This chain is Tryptophan synthase beta chain, found in Escherichia coli O45:K1 (strain S88 / ExPEC).